Reading from the N-terminus, the 406-residue chain is MMWCKTVIVLLATVGFISAEVYLKENFDNENWEDTWIYSKHPGKEFGKFVLTPGTFYNDAEADKGIQTSQDARFYAASRKFDGFSNEDKPLVVQFSVKHEQNIDCGGGYVKLFDCSLDQTDMHGESPYEIMFGPDICGPGTKKVHVIFSYKGKNHLISKDIRCKDDVYTHFYTLIVRPDNTYEVLIDNEKVESGNLEDDWDFLAPKKIKDPTATKPEDWDDRATIPDPDDKKPEDWDKPEHIPDPDATKPEDWDDEMDGEWEPPMIDNPEFKGEWQPKQLDNPNYKGAWEHPEIANPEYVPDDKLYLRKEICTLGFDLWQVKSGTIFDNVLITDDVELAAKAAAEVKNTQAGEKKMKEAQDEVQRKKDEEEAKKASDKDDEDEDDDDEEKDDESKQDKDQSEHDEL.

The first 17 residues, 1–17 (MMWCKTVIVLLATVGFI), serve as a signal peptide directing secretion. Cysteine 105 and cysteine 137 are disulfide-bonded. An alpha-D-glucoside-binding residues include tyrosine 109, lysine 111, tyrosine 128, and aspartate 135. Repeat copies occupy residues 191-202 (VESGNLEDDWDF), 210-221 (DPTATKPEDWDD), 227-238 (DPDDKKPEDWDK), 244-255 (DPDATKPEDWDD), 259-269 (GEWEPPMIDNP), 273-283 (GEWQPKQLDNP), and 287-297 (GAWEHPEIANP). Residues 191 to 255 (VESGNLEDDW…DATKPEDWDD (65 aa)) are 4 X approximate repeats. A compositionally biased stretch (basic and acidic residues) spans 207–251 (KIKDPTATKPEDWDDRATIPDPDDKKPEDWDKPEHIPDPDATKPE). The interval 207–259 (KIKDPTATKPEDWDDRATIPDPDDKKPEDWDKPEHIPDPDATKPEDWDDEMDG) is disordered. The segment at 259-297 (GEWEPPMIDNPEFKGEWQPKQLDNPNYKGAWEHPEIANP) is 3 X approximate repeats. Aspartate 317 provides a ligand contact to an alpha-D-glucoside. A disordered region spans residues 347-406 (KNTQAGEKKMKEAQDEVQRKKDEEEAKKASDKDDEDEDDDDEEKDDESKQDKDQSEHDEL). The span at 352–377 (GEKKMKEAQDEVQRKKDEEEAKKASD) shows a compositional bias: basic and acidic residues. Positions 378-391 (KDDEDEDDDDEEKD) are enriched in acidic residues. Residues 392–406 (DESKQDKDQSEHDEL) show a composition bias toward basic and acidic residues.

This sequence belongs to the calreticulin family.

The protein resides in the endoplasmic reticulum lumen. In terms of biological role, molecular calcium-binding chaperone promoting folding, oligomeric assembly and quality control in the ER via the calreticulin/calnexin cycle. This lectin may interact transiently with almost all of the monoglucosylated glycoproteins that are synthesized in the ER. The polypeptide is Calreticulin (Drosophila melanogaster (Fruit fly)).